Consider the following 306-residue polypeptide: Bacitracin transport ATP-binding protein BcrA (306 aa).

The ABC transporter domain maps to 5–233 (IKTTDLTKMY…NRKYLEFQLS (229 aa)). 37 to 44 (GRNGAGKT) contributes to the ATP binding site.

The protein belongs to the ABC transporter superfamily.

Functionally, part of the binding-protein-dependent transport system for bacitracin that confer resistance to this antibiotic. Probably responsible for energy coupling to the transport system. This Bacillus licheniformis protein is Bacitracin transport ATP-binding protein BcrA (bcrA).